The sequence spans 148 residues: MIGGVSILSLDSKGRLAIPAKHRETLLSAFGHKLVVTLESQDHLLLYPEPNWRPVEARLLALPTGNPTLKRYQRLVLGHAETLEMDSAGRVLLPARLRELTALDKDVALVGMGNRFELWNAEEWDSQTADALAIDQADLAQHLGDFTL.

2 consecutive SpoVT-AbrB domains span residues 5 to 51 and 80 to 123; these read VSIL…PEPN and AETL…NAEE.

It belongs to the MraZ family. As to quaternary structure, forms oligomers.

It is found in the cytoplasm. The protein localises to the nucleoid. This Chromobacterium violaceum (strain ATCC 12472 / DSM 30191 / JCM 1249 / CCUG 213 / NBRC 12614 / NCIMB 9131 / NCTC 9757 / MK) protein is Transcriptional regulator MraZ.